The chain runs to 100 residues: Aspartyl/glutamyl-tRNA(Asn/Gln) amidotransferase subunit C (100 aa).

Belongs to the GatC family. As to quaternary structure, heterotrimer of A, B and C subunits.

The catalysed reaction is L-glutamyl-tRNA(Gln) + L-glutamine + ATP + H2O = L-glutaminyl-tRNA(Gln) + L-glutamate + ADP + phosphate + H(+). The enzyme catalyses L-aspartyl-tRNA(Asn) + L-glutamine + ATP + H2O = L-asparaginyl-tRNA(Asn) + L-glutamate + ADP + phosphate + 2 H(+). Its function is as follows. Allows the formation of correctly charged Asn-tRNA(Asn) or Gln-tRNA(Gln) through the transamidation of misacylated Asp-tRNA(Asn) or Glu-tRNA(Gln) in organisms which lack either or both of asparaginyl-tRNA or glutaminyl-tRNA synthetases. The reaction takes place in the presence of glutamine and ATP through an activated phospho-Asp-tRNA(Asn) or phospho-Glu-tRNA(Gln). The sequence is that of Aspartyl/glutamyl-tRNA(Asn/Gln) amidotransferase subunit C from Streptococcus agalactiae serotype Ia (strain ATCC 27591 / A909 / CDC SS700).